The sequence spans 219 residues: Octanoyltransferase (219 aa).

The BPL/LPL catalytic domain occupies 37 to 219 (EHSPDQLWIL…DFNDVQVILQ (183 aa)). Substrate-binding positions include 76 to 83 (RGGQVTWH), 143 to 145 (SLG), and 156 to 158 (GLA). C174 functions as the Acyl-thioester intermediate in the catalytic mechanism.

Belongs to the LipB family.

Its subcellular location is the cytoplasm. The enzyme catalyses octanoyl-[ACP] + L-lysyl-[protein] = N(6)-octanoyl-L-lysyl-[protein] + holo-[ACP] + H(+). Its pathway is protein modification; protein lipoylation via endogenous pathway; protein N(6)-(lipoyl)lysine from octanoyl-[acyl-carrier-protein]: step 1/2. Catalyzes the transfer of endogenously produced octanoic acid from octanoyl-acyl-carrier-protein onto the lipoyl domains of lipoate-dependent enzymes. Lipoyl-ACP can also act as a substrate although octanoyl-ACP is likely to be the physiological substrate. This Acinetobacter baylyi (strain ATCC 33305 / BD413 / ADP1) protein is Octanoyltransferase.